The following is a 197-amino-acid chain: Ribosomal RNA large subunit methyltransferase E (197 aa).

Positions 50, 52, 67, 83, and 111 each coordinate S-adenosyl-L-methionine. Lys-151 serves as the catalytic Proton acceptor.

Belongs to the class I-like SAM-binding methyltransferase superfamily. RNA methyltransferase RlmE family.

The protein resides in the cytoplasm. It catalyses the reaction uridine(2552) in 23S rRNA + S-adenosyl-L-methionine = 2'-O-methyluridine(2552) in 23S rRNA + S-adenosyl-L-homocysteine + H(+). Functionally, specifically methylates the uridine in position 2552 of 23S rRNA at the 2'-O position of the ribose in the fully assembled 50S ribosomal subunit. This Thermoplasma volcanium (strain ATCC 51530 / DSM 4299 / JCM 9571 / NBRC 15438 / GSS1) protein is Ribosomal RNA large subunit methyltransferase E.